The following is a 356-amino-acid chain: tRNA N6-adenosine threonylcarbamoyltransferase (356 aa).

2 residues coordinate Fe cation: His-116 and His-120. Residues 139–143, Asp-174, Gly-187, Asp-191, and Asn-281 each bind substrate; that span reads IVSGG. Asp-309 provides a ligand contact to Fe cation.

The protein belongs to the KAE1 / TsaD family. The cofactor is Fe(2+).

The protein localises to the cytoplasm. The catalysed reaction is L-threonylcarbamoyladenylate + adenosine(37) in tRNA = N(6)-L-threonylcarbamoyladenosine(37) in tRNA + AMP + H(+). Its function is as follows. Required for the formation of a threonylcarbamoyl group on adenosine at position 37 (t(6)A37) in tRNAs that read codons beginning with adenine. Is involved in the transfer of the threonylcarbamoyl moiety of threonylcarbamoyl-AMP (TC-AMP) to the N6 group of A37, together with TsaE and TsaB. TsaD likely plays a direct catalytic role in this reaction. The polypeptide is tRNA N6-adenosine threonylcarbamoyltransferase (Frankia alni (strain DSM 45986 / CECT 9034 / ACN14a)).